The primary structure comprises 431 residues: Galactose-3-O-sulfotransferase 3 (431 aa).

The Cytoplasmic segment spans residues 1–19; that stretch reads MPPILQRLQQATKMMSRRK. A helical; Signal-anchor for type II membrane protein transmembrane segment spans residues 20-40; the sequence is ILLLVLGCSTVSLLIHQGAQL. At 41–431 the chain is on the lumenal side; that stretch reads SWYPKLFPLS…RVLPRGPQGP (391 aa). N-linked (GlcNAc...) asparagine glycans are attached at residues Asn-91, Asn-110, Asn-177, and Asn-302. Positions 399–431 are disordered; that stretch reads QKRRGGARARPEPVLDNPPPRPIRVLPRGPQGP.

The protein belongs to the galactose-3-O-sulfotransferase family. Mg(2+) is required as a cofactor. In terms of tissue distribution, highly expressed in thyroid, brain, kidney, heart and spinal cord.

The protein localises to the golgi apparatus. It localises to the golgi stack membrane. The protein operates within protein modification; carbohydrate sulfation. In terms of biological role, transfers a sulfate to position 3 of non-reducing beta-galactosyl residues in N-glycans and core2-branched O-glycans. Has high activity towards Gal-beta-1,4-GlcNAc, Gal-beta-1,4(Fuc-alpha-1,3)GlcNAc and lower activity towards Gal-beta-1,3(Fuc-alpha-1,4)GlcNAc. This Homo sapiens (Human) protein is Galactose-3-O-sulfotransferase 3 (GAL3ST3).